The primary structure comprises 137 residues: Large ribosomal subunit protein uL16 (137 aa).

The protein belongs to the universal ribosomal protein uL16 family. In terms of assembly, part of the 50S ribosomal subunit.

Functionally, binds 23S rRNA and is also seen to make contacts with the A and possibly P site tRNAs. This is Large ribosomal subunit protein uL16 from Roseobacter denitrificans (strain ATCC 33942 / OCh 114) (Erythrobacter sp. (strain OCh 114)).